Consider the following 364-residue polypeptide: Nucleoside ABC transporter permease protein NupB (364 aa).

The next 8 membrane-spanning stretches (helical) occupy residues 9–29 (LVPLIAIVFGFLLGAIIMLAF), 77–99 (FNIGMSGQALAGWISSMWFALSF), 105–125 (LLMIPLVVIIGMVFGAFMGFI), 138–158 (VITTIMLNYIMLFFSTFMIHS), 195–215 (TLNIGLIIAIIALVIMAIIFT), 244–264 (LILSMVVAGALAGLGGVVYGF), 284–304 (MAVALLGGNSPIGILFAALLF), and 326–346 (VVTAAIIFFIAVKFIIEVMLP).

Belongs to the binding-protein-dependent transport system permease family. The complex is composed of two ATP-binding proteins (NupA), two transmembrane proteins (NupB and NupC) and a solute-binding protein (BmpA).

The protein resides in the cell membrane. Functionally, part of an ABC transporter complex involved in the uptake of all common nucleosides. Responsible for the translocation of the substrate across the membrane. This Lactococcus lactis subsp. cremoris (strain MG1363) protein is Nucleoside ABC transporter permease protein NupB.